The primary structure comprises 377 residues: Uroporphyrinogen decarboxylase (377 aa).

Substrate contacts are provided by residues 40-44 (RQAGR), D89, Y169, S224, and H354.

The protein belongs to the uroporphyrinogen decarboxylase family. As to quaternary structure, homodimer.

It is found in the cytoplasm. It catalyses the reaction uroporphyrinogen III + 4 H(+) = coproporphyrinogen III + 4 CO2. It participates in porphyrin-containing compound metabolism; protoporphyrin-IX biosynthesis; coproporphyrinogen-III from 5-aminolevulinate: step 4/4. In terms of biological role, catalyzes the decarboxylation of four acetate groups of uroporphyrinogen-III to yield coproporphyrinogen-III. This is Uroporphyrinogen decarboxylase from Leifsonia xyli subsp. xyli (strain CTCB07).